A 548-amino-acid polypeptide reads, in one-letter code: Folylpolyglutamate synthase (548 aa).

Residue 130–133 (GKGS) coordinates ATP. 3 residues coordinate Mg(2+): S157, E234, and H262. Positions 382 and 396 each coordinate ATP.

The protein belongs to the folylpolyglutamate synthase family. It depends on a monovalent cation as a cofactor.

Its subcellular location is the mitochondrion inner membrane. It is found in the mitochondrion matrix. It localises to the cytoplasm. It carries out the reaction (6S)-5,6,7,8-tetrahydrofolyl-(gamma-L-Glu)(n) + L-glutamate + ATP = (6S)-5,6,7,8-tetrahydrofolyl-(gamma-L-Glu)(n+1) + ADP + phosphate + H(+). It participates in cofactor biosynthesis; tetrahydrofolylpolyglutamate biosynthesis. Catalyzes conversion of folates to polyglutamate derivatives allowing concentration of folate compounds in the cell and the intracellular retention of these cofactors, which are important substrates for most of the folate-dependent enzymes that are involved in one-carbon transfer reactions involved in purine, pyrimidine and amino acid synthesis. Required for methionine synthesis and maintenance of intact mitochondrial DNA. Involved in telomere maintenance. The polypeptide is Folylpolyglutamate synthase (Saccharomyces cerevisiae (strain AWRI1631) (Baker's yeast)).